The primary structure comprises 72 residues: uncharacterized protein (72 aa).

Residues 11–31 (WCCTVLSAFGVVILSVIAHLF) traverse the membrane as a helical segment.

It is found in the membrane. This is an uncharacterized protein from Saccharomyces cerevisiae (strain ATCC 204508 / S288c) (Baker's yeast).